The sequence spans 202 residues: Putative 3-methyladenine DNA glycosylase (202 aa).

The protein belongs to the DNA glycosylase MPG family.

The protein is Putative 3-methyladenine DNA glycosylase of Staphylococcus aureus (strain MRSA252).